A 211-amino-acid chain; its full sequence is FMN-dependent NADH:quinone oxidoreductase 3 (211 aa).

102-105 serves as a coordination point for FMN; that stretch reads MWNF.

The protein belongs to the azoreductase type 1 family. Homodimer. Requires FMN as cofactor.

The catalysed reaction is 2 a quinone + NADH + H(+) = 2 a 1,4-benzosemiquinone + NAD(+). It carries out the reaction N,N-dimethyl-1,4-phenylenediamine + anthranilate + 2 NAD(+) = 2-(4-dimethylaminophenyl)diazenylbenzoate + 2 NADH + 2 H(+). Functionally, quinone reductase that provides resistance to thiol-specific stress caused by electrophilic quinones. In terms of biological role, also exhibits azoreductase activity. Catalyzes the reductive cleavage of the azo bond in aromatic azo compounds to the corresponding amines. The protein is FMN-dependent NADH:quinone oxidoreductase 3 of Bacillus cereus (strain ZK / E33L).